Reading from the N-terminus, the 413-residue chain is Terephthalate 1,2-dioxygenase, terminal oxygenase component subunit alpha 2 (413 aa).

The region spanning 41–144 (NYLCLESEIP…CKEEHGPRKL (104 aa)) is the Rieske domain. [2Fe-2S] cluster is bound by residues cysteine 82, histidine 84, cysteine 102, and histidine 105.

Belongs to the bacterial ring-hydroxylating dioxygenase alpha subunit family. Heterotetramer composed of 2 alpha (TphA2I and TphA2II) and 2 beta (TphA3I and TphA3II) subunits. Part of a multicomponent enzyme system composed of a reductase (TphA1I or TphA1II) and a two-subunit oxygenase component (TphA2I or TphA2II and TphA3I or TphA3II). It depends on Fe cation as a cofactor. Requires [2Fe-2S] cluster as cofactor.

The enzyme catalyses terephthalate + NADH + O2 + H(+) = (3S,4R)-3,4-dihydroxycyclohexa-1,5-diene-1,4-dicarboxylate + NAD(+). Its activity is regulated as follows. Inhibited by EDTA. Its function is as follows. Component of the terephthalate 1,2-dioxygenase multicomponent enzyme system which catalyzes the dioxygenation of terephthalate (TER/TPA) to 1,2-dihydroxy-3,5-cyclohexadiene-1,4-dicarboxylic acid (DCD). It can also use 2,5-dicarboxypyridine (PDC) and 1,4-napthalenedicarboxylic acid (NDC) as substrates, and preferentially uses NADPH which is the physiological electron donor. The polypeptide is Terephthalate 1,2-dioxygenase, terminal oxygenase component subunit alpha 2 (tphA2II) (Comamonas sp).